Consider the following 627-residue polypeptide: MATVRICVCGDESTGKSSLIASLVKDQFVNNKIQPVLPQITIPPSIGTPENVSTTIVDTSARPQDRTTLRKEIRKCNVILLVYADHYSYERVALFWMPYFRSLGVNVPVVLCANKSDLVGQGTTPQVVEEELLPVMAEFREVDSCIRTSARDHRNVNEVFFLCQKAVTHPIAPLFDYKEGHLKPLCINALKRIFYLCDKDQDGYLNEQEMRDFQARCFDKPLTTDDLDNIKLSIAKSLPASDLEKGIDLPGFLQLNKLYAEKGRHETIWIILRKFHYTDSLSLEDKFIRPKFEVPEYSSAELSPAGYRFFVDLFLIFDKDNDGGLNDEELEALFAPAPGLPSSWTDSSFPSSTVRNEAGHVTLQGWLAQWSMTTFIEPKTTIEYLAYLGFEPSNPKDSITAALKITKPRKRRSRLGRVERNVVLCYVLGASGAGKSALLDSFLNRPFYGLYHPTIKPRRAVNSVELPGGKQVYLILEELGELEPAILENRAKLDACDLICYAYDSSDPDSFSHIVDLRKKYPHLDELPSIYTALKADKDKTNQRCELQPDQYTSSLSMSLPLHVSVTWGSISELFVAYADAATTPSTAFPRSNEEGPDRTSLYIALGATACAGVAALTIWRRATNAL.

A Miro 1 domain is found at 1–169 (MATVRICVCG…FFLCQKAVTH (169 aa)). Topologically, residues 1-599 (MATVRICVCG…PRSNEEGPDR (599 aa)) are cytoplasmic. GTP-binding positions include 10–17 (GDESTGKS), 58–62 (DTSAR), and 114–117 (NKSD). EF-hand domains are found at residues 185-220 (LCIN…CFDK) and 305-340 (AGYR…APGL). Residues Asp-198, Asp-200, Asp-202, Tyr-204, Glu-209, Asp-318, Asp-320, Asp-322, and Glu-329 each contribute to the Ca(2+) site. Residues 420–584 (RNVVLCYVLG…FVAYADAATT (165 aa)) form the Miro 2 domain. GTP contacts are provided by residues 429-436 (GASGAGKS), 465-469 (ELPGG), and 534-537 (LKAD). Residues 600–620 (TSLYIALGATACAGVAALTIW) form a helical; Anchor for type IV membrane protein membrane-spanning segment. Residues 621-627 (RRATNAL) are Mitochondrial intermembrane-facing.

The protein belongs to the mitochondrial Rho GTPase family.

The protein resides in the mitochondrion outer membrane. Functionally, mitochondrial GTPase involved in mitochondrial trafficking. Probably involved in control of anterograde transport of mitochondria and their subcellular distribution. The chain is Mitochondrial Rho GTPase 1 (GEM1) from Gibberella zeae (strain ATCC MYA-4620 / CBS 123657 / FGSC 9075 / NRRL 31084 / PH-1) (Wheat head blight fungus).